The sequence spans 102 residues: Large ribosomal subunit protein bL21 (102 aa).

This sequence belongs to the bacterial ribosomal protein bL21 family. Part of the 50S ribosomal subunit. Contacts protein L20.

This protein binds to 23S rRNA in the presence of protein L20. The chain is Large ribosomal subunit protein bL21 from Geobacter sulfurreducens (strain ATCC 51573 / DSM 12127 / PCA).